Here is an 82-residue protein sequence, read N- to C-terminus: Cytochrome c oxidase subunit 8, mitochondrial (82 aa).

The transit peptide at 1-31 (MFSRVALRAAPRQQPFSLVARRTFQTTRAQL) directs the protein to the mitochondrion. The Mitochondrial matrix portion of the chain corresponds to 32 to 52 (SSPYHYPEGPRSNLPFNPKTR). Residues 53 to 75 (FFWFRYLMYCVVGFGSPVAIAVW) form a helical membrane-spanning segment. Residues 76-82 (QTYRPRS) lie on the Mitochondrial intermembrane side of the membrane.

Belongs to the cytochrome c oxidase VIIc family. As to quaternary structure, component of the cytochrome c oxidase (complex IV, CIV), a multisubunit enzyme composed of 11 subunits. The complex is composed of a catalytic core of 3 subunits Cox1, Cox2 and Cox3, encoded in the mitochondrial DNA, and 8 supernumerary subunits Cox4, Cox5a/Cox5, Cox6, Cox7, Cox8, Cox7a/Cox9, Cox6b/Cox12 and Cox6a/Cox13, which are encoded in the nuclear genome. The complex exists as a monomer or a dimer and forms respiratory supercomplexes (SCs) in the inner mitochondrial membrane with NADH-ubiquinone oxidoreductase (complex I, CI) and ubiquinol-cytochrome c oxidoreductase (cytochrome b-c1 complex, complex III, CIII), resulting in various different assemblies (supercomplexes I(1)IV(1), I(1)III(3)IV(2), III(2)IV(1) and III(2)IV(2) as well as larger supercomplexes of compositions like I(1)III(2)IV(5-6)).

It localises to the mitochondrion inner membrane. Its pathway is energy metabolism; oxidative phosphorylation. Component of the cytochrome c oxidase, the last enzyme in the mitochondrial electron transport chain which drives oxidative phosphorylation. The respiratory chain contains 3 multisubunit complexes succinate dehydrogenase (complex II, CII), ubiquinol-cytochrome c oxidoreductase (cytochrome b-c1 complex, complex III, CIII) and cytochrome c oxidase (complex IV, CIV), that cooperate to transfer electrons derived from NADH and succinate to molecular oxygen, creating an electrochemical gradient over the inner membrane that drives transmembrane transport and the ATP synthase. Cytochrome c oxidase is the component of the respiratory chain that catalyzes the reduction of oxygen to water. Electrons originating from reduced cytochrome c in the intermembrane space (IMS) are transferred via the dinuclear copper A center (CU(A)) of Cox2 and heme A of Cox1 to the active site in Cox1, a binuclear center (BNC) formed by heme A3 and copper B (CU(B)). The BNC reduces molecular oxygen to 2 water molecules using 4 electrons from cytochrome c in the IMS and 4 protons from the mitochondrial matrix. The sequence is that of Cytochrome c oxidase subunit 8, mitochondrial (cox-15) from Neurospora crassa (strain ATCC 24698 / 74-OR23-1A / CBS 708.71 / DSM 1257 / FGSC 987).